We begin with the raw amino-acid sequence, 344 residues long: Aromatic amino acid aminotransferase (344 aa).

Lys213 bears the N6-(pyridoxal phosphate)lysine mark.

It belongs to the class-II pyridoxal-phosphate-dependent aminotransferase family. As to quaternary structure, homodimer. Pyridoxal 5'-phosphate serves as cofactor.

It carries out the reaction an aromatic L-alpha-amino acid + 2-oxoglutarate = an aromatic oxo-acid + L-glutamate. Functionally, aminotransferase that catalyzes the conversion of aromatic amino acids and 2-oxoglutarate into corresponding aromatic oxo acids and L-glutamate. This is Aromatic amino acid aminotransferase from Corynebacterium diphtheriae (strain ATCC 700971 / NCTC 13129 / Biotype gravis).